The following is a 621-amino-acid chain: Autonomous transposable element EN-1 mosaic protein (621 aa).

Disordered regions lie at residues 1 to 119 (MFRM…PPRR), 428 to 447 (YTRR…PSAR), 498 to 530 (QQPP…TSVQ), and 549 to 621 (RQPG…PPTE). 2 stretches are compositionally biased toward polar residues: residues 27-39 (EGTT…QEQL) and 47-61 (RGSS…TTSR). Residues 82 to 102 (AAVDAEAEEAAAELDDGEETS) are compositionally biased toward acidic residues. The segment covering 570 to 594 (PPRGQSQSPGLPSHSPGSGSGSHHA) has biased composition (low complexity).

Functionally, this protein has most probably three functions; the mutator (M) function, for excision and transposition; the suppressor (S) function, which inhibits residual gene activity of certain alleles in which inhibitor elements are integrated; an activator (A) function is proposed, because inactive SPM can be activated by a second SPM. The protein is Autonomous transposable element EN-1 mosaic protein of Zea mays (Maize).